We begin with the raw amino-acid sequence, 632 residues long: tRNA uridine 5-carboxymethylaminomethyl modification enzyme MnmG (632 aa).

FAD is bound by residues 16–21 (GAGHAG), Val128, and Ser183. The interval 206–225 (PRVNGNTIDYSKTEEEPGDK) is disordered. Basic and acidic residues predominate over residues 216–225 (SKTEEEPGDK). 277–291 (GPRYCPSIEDKVVRF) contributes to the NAD(+) binding site. An FAD-binding site is contributed by Gln374.

This sequence belongs to the MnmG family. In terms of assembly, homodimer. Heterotetramer of two MnmE and two MnmG subunits. The cofactor is FAD.

The protein localises to the cytoplasm. Its function is as follows. NAD-binding protein involved in the addition of a carboxymethylaminomethyl (cmnm) group at the wobble position (U34) of certain tRNAs, forming tRNA-cmnm(5)s(2)U34. This is tRNA uridine 5-carboxymethylaminomethyl modification enzyme MnmG from Lactobacillus acidophilus (strain ATCC 700396 / NCK56 / N2 / NCFM).